Here is a 214-residue protein sequence, read N- to C-terminus: ATP phosphoribosyltransferase (214 aa).

The protein belongs to the ATP phosphoribosyltransferase family. Short subfamily. In terms of assembly, heteromultimer composed of HisG and HisZ subunits.

It localises to the cytoplasm. The enzyme catalyses 1-(5-phospho-beta-D-ribosyl)-ATP + diphosphate = 5-phospho-alpha-D-ribose 1-diphosphate + ATP. Its pathway is amino-acid biosynthesis; L-histidine biosynthesis; L-histidine from 5-phospho-alpha-D-ribose 1-diphosphate: step 1/9. Functionally, catalyzes the condensation of ATP and 5-phosphoribose 1-diphosphate to form N'-(5'-phosphoribosyl)-ATP (PR-ATP). Has a crucial role in the pathway because the rate of histidine biosynthesis seems to be controlled primarily by regulation of HisG enzymatic activity. In Marinomonas sp. (strain MWYL1), this protein is ATP phosphoribosyltransferase.